A 95-amino-acid chain; its full sequence is Aspartyl/glutamyl-tRNA(Asn/Gln) amidotransferase subunit C (95 aa).

It belongs to the GatC family. Heterotrimer of A, B and C subunits.

It carries out the reaction L-glutamyl-tRNA(Gln) + L-glutamine + ATP + H2O = L-glutaminyl-tRNA(Gln) + L-glutamate + ADP + phosphate + H(+). It catalyses the reaction L-aspartyl-tRNA(Asn) + L-glutamine + ATP + H2O = L-asparaginyl-tRNA(Asn) + L-glutamate + ADP + phosphate + 2 H(+). Functionally, allows the formation of correctly charged Asn-tRNA(Asn) or Gln-tRNA(Gln) through the transamidation of misacylated Asp-tRNA(Asn) or Glu-tRNA(Gln) in organisms which lack either or both of asparaginyl-tRNA or glutaminyl-tRNA synthetases. The reaction takes place in the presence of glutamine and ATP through an activated phospho-Asp-tRNA(Asn) or phospho-Glu-tRNA(Gln). The chain is Aspartyl/glutamyl-tRNA(Asn/Gln) amidotransferase subunit C from Brucella anthropi (strain ATCC 49188 / DSM 6882 / CCUG 24695 / JCM 21032 / LMG 3331 / NBRC 15819 / NCTC 12168 / Alc 37) (Ochrobactrum anthropi).